The sequence spans 250 residues: Bacteriorhodopsin-I (250 aa).

7 consecutive transmembrane segments (helical) span residues 7 to 27, 42 to 62, 81 to 101, 114 to 134, 139 to 159, 185 to 205, and 207 to 227; these read EGIW…YFIA, IATI…ALGF, YTDW…LAGA, VLMI…VLSA, LVWW…LFSS, VWLV…LVGI, and IETA…GIIL. Lysine 220 is modified (N6-(retinylidene)lysine).

The protein belongs to the archaeal/bacterial/fungal opsin family. The covalent binding of retinal to the apoprotein, bacterioopsin, generates bacteriorhodopsin.

The protein resides in the membrane. In terms of biological role, light-driven proton pump. In Haloarcula marismortui (strain ATCC 43049 / DSM 3752 / JCM 8966 / VKM B-1809) (Halobacterium marismortui), this protein is Bacteriorhodopsin-I (bop).